Reading from the N-terminus, the 199-residue chain is FMN-dependent NADH:quinone oxidoreductase 2 (199 aa).

Residues Ser-10, 17–19, and 135–138 contribute to the FMN site; these read SDS and TKGG.

The protein belongs to the azoreductase type 1 family. In terms of assembly, homodimer. FMN is required as a cofactor.

The enzyme catalyses 2 a quinone + NADH + H(+) = 2 a 1,4-benzosemiquinone + NAD(+). The catalysed reaction is N,N-dimethyl-1,4-phenylenediamine + anthranilate + 2 NAD(+) = 2-(4-dimethylaminophenyl)diazenylbenzoate + 2 NADH + 2 H(+). Quinone reductase that provides resistance to thiol-specific stress caused by electrophilic quinones. In terms of biological role, also exhibits azoreductase activity. Catalyzes the reductive cleavage of the azo bond in aromatic azo compounds to the corresponding amines. This chain is FMN-dependent NADH:quinone oxidoreductase 2, found in Mesoplasma florum (strain ATCC 33453 / NBRC 100688 / NCTC 11704 / L1) (Acholeplasma florum).